A 243-amino-acid polypeptide reads, in one-letter code: Sugar fermentation stimulation protein homolog (243 aa).

It belongs to the SfsA family.

The protein is Sugar fermentation stimulation protein homolog of Lacticaseibacillus casei (strain BL23) (Lactobacillus casei).